The primary structure comprises 179 residues: Adenine phosphoribosyltransferase (179 aa).

It belongs to the purine/pyrimidine phosphoribosyltransferase family. Homodimer.

It localises to the cytoplasm. It carries out the reaction AMP + diphosphate = 5-phospho-alpha-D-ribose 1-diphosphate + adenine. The protein operates within purine metabolism; AMP biosynthesis via salvage pathway; AMP from adenine: step 1/1. In terms of biological role, catalyzes a salvage reaction resulting in the formation of AMP, that is energically less costly than de novo synthesis. The protein is Adenine phosphoribosyltransferase of Gluconobacter oxydans (strain 621H) (Gluconobacter suboxydans).